A 263-amino-acid chain; its full sequence is Small ribosomal subunit protein uS2 (263 aa).

N-acetylserine is present on S2. The span at 211–242 (EQTAEEEAEAAEGAEFEVEEEEVEQEWQEPAE) shows a compositional bias: acidic residues. The disordered stretch occupies residues 211 to 263 (EQTAEEEAEAAEGAEFEVEEEEVEQEWQEPAEADWNASAPPADWNDAANAEAF). Over residues 246–263 (NASAPPADWNDAANAEAF) the composition is skewed to low complexity.

Belongs to the universal ribosomal protein uS2 family. As to quaternary structure, component of the small ribosomal subunit. Mature ribosomes consist of a small (40S) and a large (60S) subunit. The 40S subunit contains about 33 different proteins and 1 molecule of RNA (18S). The 60S subunit contains about 49 different proteins and 3 molecules of RNA (25S, 5.8S and 5S). Interacts with RPS21.

Its subcellular location is the cytoplasm. Its function is as follows. Required for the assembly and/or stability of the 40S ribosomal subunit. Required for the processing of the 20S rRNA-precursor to mature 18S rRNA in a late step of the maturation of 40S ribosomal subunits. The polypeptide is Small ribosomal subunit protein uS2 (Komagataella phaffii (strain GS115 / ATCC 20864) (Yeast)).